The following is a 1014-amino-acid chain: Valine--tRNA ligase (1014 aa).

Positions 49-59 (PNVTGSLHMGH) match the 'HIGH' region motif. A 'KMSKS' region motif is present at residues 542–546 (KMSKS). Position 545 (K545) interacts with ATP. Residues 947–1014 (VVDIETLRAK…ILRLRLQTLV (68 aa)) adopt a coiled-coil conformation.

This sequence belongs to the class-I aminoacyl-tRNA synthetase family. ValS type 1 subfamily. In terms of assembly, monomer.

It is found in the cytoplasm. It carries out the reaction tRNA(Val) + L-valine + ATP = L-valyl-tRNA(Val) + AMP + diphosphate. Catalyzes the attachment of valine to tRNA(Val). As ValRS can inadvertently accommodate and process structurally similar amino acids such as threonine, to avoid such errors, it has a 'posttransfer' editing activity that hydrolyzes mischarged Thr-tRNA(Val) in a tRNA-dependent manner. The sequence is that of Valine--tRNA ligase from Nostoc sp. (strain PCC 7120 / SAG 25.82 / UTEX 2576).